Here is a 239-residue protein sequence, read N- to C-terminus: 1-(5-phosphoribosyl)-5-[(5-phosphoribosylamino)methylideneamino] imidazole-4-carboxamide isomerase (239 aa).

Catalysis depends on aspartate 8, which acts as the Proton acceptor. Aspartate 129 serves as the catalytic Proton donor.

It belongs to the HisA/HisF family.

The protein localises to the cytoplasm. It carries out the reaction 1-(5-phospho-beta-D-ribosyl)-5-[(5-phospho-beta-D-ribosylamino)methylideneamino]imidazole-4-carboxamide = 5-[(5-phospho-1-deoxy-D-ribulos-1-ylimino)methylamino]-1-(5-phospho-beta-D-ribosyl)imidazole-4-carboxamide. It functions in the pathway amino-acid biosynthesis; L-histidine biosynthesis; L-histidine from 5-phospho-alpha-D-ribose 1-diphosphate: step 4/9. This Legionella pneumophila (strain Corby) protein is 1-(5-phosphoribosyl)-5-[(5-phosphoribosylamino)methylideneamino] imidazole-4-carboxamide isomerase.